A 296-amino-acid polypeptide reads, in one-letter code: Ribosomal RNA small subunit methyltransferase A (296 aa).

Asparagine 30, leucine 32, glycine 57, glutamate 78, aspartate 103, and asparagine 128 together coordinate S-adenosyl-L-methionine.

It belongs to the class I-like SAM-binding methyltransferase superfamily. rRNA adenine N(6)-methyltransferase family. RsmA subfamily.

Its subcellular location is the cytoplasm. It catalyses the reaction adenosine(1518)/adenosine(1519) in 16S rRNA + 4 S-adenosyl-L-methionine = N(6)-dimethyladenosine(1518)/N(6)-dimethyladenosine(1519) in 16S rRNA + 4 S-adenosyl-L-homocysteine + 4 H(+). Its function is as follows. Specifically dimethylates two adjacent adenosines (A1518 and A1519) in the loop of a conserved hairpin near the 3'-end of 16S rRNA in the 30S particle. May play a critical role in biogenesis of 30S subunits. This Staphylococcus epidermidis (strain ATCC 35984 / DSM 28319 / BCRC 17069 / CCUG 31568 / BM 3577 / RP62A) protein is Ribosomal RNA small subunit methyltransferase A.